A 154-amino-acid polypeptide reads, in one-letter code: Large ribosomal subunit protein uL15 (154 aa).

The tract at residues 17 to 44 (KRVGRGIGSGTGKTGGRGVKGQRSRSGV) is disordered. A compositionally biased stretch (gly residues) spans 21–35 (RGIGSGTGKTGGRGV).

This sequence belongs to the universal ribosomal protein uL15 family. Part of the 50S ribosomal subunit.

Its function is as follows. Binds to the 23S rRNA. The protein is Large ribosomal subunit protein uL15 of Bartonella henselae (strain ATCC 49882 / DSM 28221 / CCUG 30454 / Houston 1) (Rochalimaea henselae).